Consider the following 301-residue polypeptide: Homeobox protein knotted-1-like 1 (301 aa).

The tract at residues 141–170 is disordered; it reads CSGATSPPATTATHSDEMVGSSDEDQCSGE. The span at 144–153 shows a compositional bias: low complexity; the sequence is ATSPPATTAT. An ELK domain is found at 188 to 208; the sequence is ELKEMLLKKYSGCLSRLRSEF. Residues 209–272 constitute a DNA-binding region (homeobox; TALE-type); that stretch reads LKKRKKGKLP…NQRKRHWKPS (64 aa).

This sequence belongs to the TALE/KNOX homeobox family.

The protein localises to the nucleus. In terms of biological role, probable transcription factor that may be involved in shoot formation during early embryogenesis. This is Homeobox protein knotted-1-like 1 (OSH6) from Oryza sativa subsp. japonica (Rice).